Reading from the N-terminus, the 47-residue chain is Protein YpaB (47 aa).

This is Protein YpaB (ypaB) from Escherichia coli (strain K12).